We begin with the raw amino-acid sequence, 487 residues long: 7-deoxyloganetin glucosyltransferase (487 aa).

Histidine 25 functions as the Proton acceptor in the catalytic mechanism. An anthocyanidin is bound at residue histidine 25. Residue aspartate 129 is the Charge relay of the active site. Positions 151, 366, 381, 384, 385, 386, and 389 each coordinate UDP-alpha-D-glucose. Alanine 404 contributes to the an anthocyanidin binding site. 2 residues coordinate UDP-alpha-D-glucose: glutamate 405 and glutamine 406.

Belongs to the UDP-glycosyltransferase family. As to expression, expressed in roots.

The enzyme catalyses 7-deoxyloganetin + UDP-alpha-D-glucose = 7-deoxyloganin + UDP + H(+). Its function is as follows. Iridoid glucosyltransferase acting exclusively on 7-deoxyloganetin. No activity with 7-deoxyloganetic acid. This is 7-deoxyloganetin glucosyltransferase (UGT85A23) from Catharanthus roseus (Madagascar periwinkle).